The sequence spans 479 residues: Envelope glycoprotein C homolog (479 aa).

Positions 1–22 are cleaved as a signal peptide; it reads MASLARAMLALLALYAAAIAAA. Over 23–451 the chain is Virion surface; that stretch reads PSTTTALDTT…SVSWPVVSSM (429 aa). The interval 26-96 is disordered; that stretch reads TTALDTTPNG…RVHGDKATAH (71 aa). N-linked (GlcNAc...) asparagine; by host glycosylation occurs at asparagine 40. Residues 48–57 show a composition bias toward pro residues; it reads PSPPPTPAPA. Residues 75–82 form an HDB1 region; sequence SRRKPPRN. A compositionally biased stretch (basic residues) spans 75–87; the sequence is SRRKPPRNNNRTR. N-linked (GlcNAc...) asparagine; by host glycosylation is present at asparagine 84. The HDB2 stretch occupies residues 95-101; it reads AHGRKRI. Cysteine 103 and cysteine 120 form a disulfide bridge. The segment at 135–140 is HDB3; it reads YRRGRF. Residues asparagine 169, asparagine 192, asparagine 220, asparagine 228, asparagine 285, and asparagine 302 are each glycosylated (N-linked (GlcNAc...) asparagine; by host). 3 disulfides stabilise this stretch: cysteine 256–cysteine 326, cysteine 365–cysteine 418, and cysteine 369–cysteine 392. Residues 452-472 form a helical membrane-spanning segment; it reads IVVIAGIGILAIVLVIMATCV. At 473-479 the chain is on the cytoplasmic side; it reads YYRQAGP.

Belongs to the herpesviridae glycoprotein C family. Interacts with host complement component C3; this interaction inhibits host immune response by disregulating complement cascade.

Its subcellular location is the virion membrane. Its function is as follows. Essential for the initial attachment to heparan sulfate moieties of the host cell surface proteoglycans. Plays also a role in host immune evasion by inhibiting the host complement cascade activation. The polypeptide is Envelope glycoprotein C homolog (gC) (Suid herpesvirus 1 (strain Indiana-Funkhauser / Becker) (SuHV-1)).